We begin with the raw amino-acid sequence, 291 residues long: Cytosolic Fe-S cluster assembly factor CFD1 (291 aa).

24-31 (GKGGVGKS) is an ATP binding site. C199 and C202 together coordinate [4Fe-4S] cluster. The segment at 270 to 291 (ENEEEAKETAEEEKSRAATNGQ) is disordered. The span at 276-285 (KETAEEEKSR) shows a compositional bias: basic and acidic residues.

This sequence belongs to the Mrp/NBP35 ATP-binding proteins family. NUBP2/CFD1 subfamily. In terms of assembly, heterotetramer of 2 NBP35 and 2 CFD1 chains. It depends on [4Fe-4S] cluster as a cofactor.

The protein resides in the cytoplasm. Component of the cytosolic iron-sulfur (Fe/S) protein assembly (CIA) machinery. Required for maturation of extramitochondrial Fe-S proteins. The NBP35-CFD1 heterotetramer forms a Fe-S scaffold complex, mediating the de novo assembly of an Fe-S cluster and its transfer to target apoproteins. Required for biogenesis and export of both ribosomal subunits, which may reflect a role in assembly of the Fe/S clusters in RLI1, a protein which performs rRNA processing and ribosome export. The protein is Cytosolic Fe-S cluster assembly factor CFD1 of Yarrowia lipolytica (strain CLIB 122 / E 150) (Yeast).